Reading from the N-terminus, the 517-residue chain is MTVTPALLVILDGFGYREDSHDNAIALANTPNIDRFWTQYPHTLINASETFVGLPRGQMGNSEVGHLNIGAGRVVFQDFERINQAIASREFFSNPVLIEAVNKAKAGHKAVHILGLLSDGGVHSHQDHIHATIEMAVNAGVEKVYVHAFLDGRDTPPISAKPYLEKLEQACASIGGGKIASICGRFYAMDRDKRWPRVEAAYNLITDGQGEFASASALQGLEAAYARDEKDEFVKATAIAAAGEQPVTMEDGDVVIFVNFRSDRARQLTHALLDPDFEGFNRRRQPKLAGFYTLTLYDKAETRAKPIFAPVEIRNTFGEYVAQHGLKQLRIAETEKYPHVTFFFNGGEEQVFAGEDRILVPSPKVATYDLQPEMSAYEVTDRLEAAILSRKYDAIICNYANCDMVGHSGDLSASIKAVETIDTCIARIVKAMESIGGQMIITADHGNVEQMRDYENNQPHTQHTTNQVPLFFIGKPATLAAPGTGSLCDLAPSLLAMMGLKQPPEMTGKSLVAFQAA.

The Mn(2+) site is built by Asp12 and Ser62. Ser62 functions as the Phosphoserine intermediate in the catalytic mechanism. Substrate is bound by residues His123, 153–154, Arg185, Arg191, 261–264, and Lys336; these read RD and RSDR. Mn(2+) is bound by residues Asp403, His407, Asp444, His445, and His463.

The protein belongs to the BPG-independent phosphoglycerate mutase family. Monomer. It depends on Mn(2+) as a cofactor.

It catalyses the reaction (2R)-2-phosphoglycerate = (2R)-3-phosphoglycerate. The protein operates within carbohydrate degradation; glycolysis; pyruvate from D-glyceraldehyde 3-phosphate: step 3/5. Functionally, catalyzes the interconversion of 2-phosphoglycerate and 3-phosphoglycerate. This is 2,3-bisphosphoglycerate-independent phosphoglycerate mutase from Methylobacillus flagellatus (strain ATCC 51484 / DSM 6875 / VKM B-1610 / KT).